Consider the following 275-residue polypeptide: 3-methyl-2-oxobutanoate hydroxymethyltransferase (275 aa).

Mg(2+)-binding residues include D55 and D94. Residues 55 to 56, D94, and K123 contribute to the 3-methyl-2-oxobutanoate site; that span reads DS. Residue E125 coordinates Mg(2+). E192 functions as the Proton acceptor in the catalytic mechanism.

The protein belongs to the PanB family. In terms of assembly, homodecamer; pentamer of dimers. It depends on Mg(2+) as a cofactor.

It is found in the cytoplasm. The enzyme catalyses 3-methyl-2-oxobutanoate + (6R)-5,10-methylene-5,6,7,8-tetrahydrofolate + H2O = 2-dehydropantoate + (6S)-5,6,7,8-tetrahydrofolate. Its pathway is cofactor biosynthesis; (R)-pantothenate biosynthesis; (R)-pantoate from 3-methyl-2-oxobutanoate: step 1/2. In terms of biological role, catalyzes the reversible reaction in which hydroxymethyl group from 5,10-methylenetetrahydrofolate is transferred onto alpha-ketoisovalerate to form ketopantoate. The chain is 3-methyl-2-oxobutanoate hydroxymethyltransferase from Halorhodospira halophila (strain DSM 244 / SL1) (Ectothiorhodospira halophila (strain DSM 244 / SL1)).